A 367-amino-acid polypeptide reads, in one-letter code: Isocitrate dehydrogenase [NAD] regulatory subunit 2, mitochondrial (367 aa).

Residues 1 to 25 constitute a mitochondrion transit peptide; that stretch reads MSRQSFSLLKNLRSIASGSKIQTRS.

The protein belongs to the isocitrate and isopropylmalate dehydrogenases family. As to quaternary structure, heterooligomer of catalytic and regulatory subunits. In terms of tissue distribution, ubiquitous. Predominantly expressed in roots, stems and leaves.

The protein resides in the mitochondrion. Its function is as follows. Performs an essential role in the oxidative function of the citric acid cycle. In Arabidopsis thaliana (Mouse-ear cress), this protein is Isocitrate dehydrogenase [NAD] regulatory subunit 2, mitochondrial (IDH2).